The chain runs to 226 residues: dTTP/UTP pyrophosphatase (226 aa).

The active-site Proton acceptor is the Asp-85.

This sequence belongs to the Maf family. YhdE subfamily. Requires a divalent metal cation as cofactor.

Its subcellular location is the cytoplasm. The catalysed reaction is dTTP + H2O = dTMP + diphosphate + H(+). It carries out the reaction UTP + H2O = UMP + diphosphate + H(+). Functionally, nucleoside triphosphate pyrophosphatase that hydrolyzes dTTP and UTP. May have a dual role in cell division arrest and in preventing the incorporation of modified nucleotides into cellular nucleic acids. The polypeptide is dTTP/UTP pyrophosphatase (Psychrobacter cryohalolentis (strain ATCC BAA-1226 / DSM 17306 / VKM B-2378 / K5)).